The sequence spans 116 residues: Peptidyl-tRNA hydrolase (116 aa).

It belongs to the PTH2 family.

The protein localises to the cytoplasm. The catalysed reaction is an N-acyl-L-alpha-aminoacyl-tRNA + H2O = an N-acyl-L-amino acid + a tRNA + H(+). Functionally, the natural substrate for this enzyme may be peptidyl-tRNAs which drop off the ribosome during protein synthesis. This is Peptidyl-tRNA hydrolase from Methanopyrus kandleri (strain AV19 / DSM 6324 / JCM 9639 / NBRC 100938).